The sequence spans 78 residues: Small ribosomal subunit protein bS18 (78 aa).

This sequence belongs to the bacterial ribosomal protein bS18 family. In terms of assembly, part of the 30S ribosomal subunit. Forms a tight heterodimer with protein bS6.

Functionally, binds as a heterodimer with protein bS6 to the central domain of the 16S rRNA, where it helps stabilize the platform of the 30S subunit. The protein is Small ribosomal subunit protein bS18 of Parafrankia sp. (strain EAN1pec).